A 793-amino-acid chain; its full sequence is E3 UFM1-protein ligase 1 (793 aa).

Residues 2–212 (AADWEEIRRL…INNLLNLYGF (211 aa)) form a required for E3 UFM1-protein ligase activity region. 2 disordered regions span residues 405-472 (ALLE…RNKL) and 745-793 (GAEK…SVTE). Residues 427–439 (EGGGSVKSGGGGN) are compositionally biased toward gly residues. Basic and acidic residues predominate over residues 767–781 (SLQRELHSLSRDIKD).

It belongs to the UFL1 family. Catalytic component of the UFM1 ribosome E3 ligase (UREL) complex. Interacts with E2-like enzyme UFC1.

It is found in the endoplasmic reticulum membrane. The protein resides in the cytoplasm. It localises to the cytosol. Its subcellular location is the nucleus. The protein localises to the chromosome. In terms of biological role, E3 protein ligase that mediates ufmylation, the covalent attachment of the ubiquitin-like modifier UFM1 to lysine residues on target proteins, and which plays a key role in various processes, such as ribosome recycling, response to DNA damage, interferon response or reticulophagy (also called ER-phagy). As part of the UREL complex, plays a key role in ribosome recycling by catalyzing mono-ufmylation of RPL26/uL24 subunit of the 60S ribosome. Ufmylation of RPL26/uL24 occurs on free 60S ribosomes following ribosome dissociation: it weakens the junction between post-termination 60S subunits and SEC61 translocons, promoting release and recycling of the large ribosomal subunit from the endoplasmic reticulum membrane. Ufmylation of RPL26/uL24 and subsequent 60S ribosome recycling either take place after normal termination of translation or after ribosome stalling during cotranslational translocation at the endoplasmic reticulum. Involved in reticulophagy in response to endoplasmic reticulum stress by mediating ufmylation of proteins such as CYB5R3 and RPN1, thereby promoting lysosomal degradation of ufmylated proteins. Ufmylation in response to endoplasmic reticulum stress is essential for processes such as hematopoiesis, blood vessel morphogenesis or inflammatory response. This chain is E3 UFM1-protein ligase 1, found in Danio rerio (Zebrafish).